The sequence spans 882 residues: Valine--tRNA ligase (882 aa).

Residues 45 to 55 (PNVTGSLHIGH) carry the 'HIGH' region motif. The short motif at 525–529 (KFSKS) is the 'KMSKS' region element. Lysine 528 is a binding site for ATP. The stretch at 812 to 881 (EGLIDVAKEK…VLKKGIQNLA (70 aa)) forms a coiled coil.

This sequence belongs to the class-I aminoacyl-tRNA synthetase family. ValS type 1 subfamily. As to quaternary structure, monomer.

Its subcellular location is the cytoplasm. The enzyme catalyses tRNA(Val) + L-valine + ATP = L-valyl-tRNA(Val) + AMP + diphosphate. Catalyzes the attachment of valine to tRNA(Val). As ValRS can inadvertently accommodate and process structurally similar amino acids such as threonine, to avoid such errors, it has a 'posttransfer' editing activity that hydrolyzes mischarged Thr-tRNA(Val) in a tRNA-dependent manner. This chain is Valine--tRNA ligase, found in Leptospira interrogans serogroup Icterohaemorrhagiae serovar copenhageni (strain Fiocruz L1-130).